A 154-amino-acid chain; its full sequence is Nuclear cap-binding protein subunit 2 (154 aa).

Residues Tyr-10, Tyr-33, 102–106 (RCDWD), 113–117 (RQYGR), and 123–124 (QV) contribute to the mRNA site. The 79-residue stretch at 30–108 (STLYMGNLSF…RIIRCDWDAG (79 aa)) folds into the RRM domain.

Belongs to the RRM NCBP2 family. In terms of assembly, component of the nuclear cap-binding complex (CBC), a heterodimer composed of Cbp80 and Cbp20 that interacts with m7GpppG-capped RNA.

The protein resides in the nucleus. Component of the cap-binding complex (CBC), which binds co-transcriptionally to the 5' cap of pre-mRNAs and is involved in various processes such as pre-mRNA splicing and RNA-mediated gene silencing (RNAi). The CBC complex is involved in miRNA-mediated RNA interference and is required for primary microRNAs (miRNAs) processing. Also involved in innate immunity via the short interfering RNAs (siRNAs) processing machinery by restricting the viral RNA production. In the CBC complex, Cbp20 recognizes and binds capped RNAs (m7GpppG-capped RNA) but requires Cbp80 to stabilize the movement of its N-terminal loop and lock the CBC into a high affinity cap-binding state with the cap structure. The sequence is that of Nuclear cap-binding protein subunit 2 from Bombyx mori (Silk moth).